The primary structure comprises 332 residues: Phosphatidylglycerol--prolipoprotein diacylglyceryl transferase (332 aa).

Helical transmembrane passes span 18 to 38 (FPYF…AYIL), 66 to 86 (FFTW…TMVY), and 111 to 131 (VGLR…GGGL). Position 159 (Arg159) interacts with a 1,2-diacyl-sn-glycero-3-phospho-(1'-sn-glycerol). The next 2 helical transmembrane spans lie at 249-269 (GFLV…IEYF) and 302-322 (ILCV…SAYH).

It belongs to the Lgt family.

It localises to the cell inner membrane. It catalyses the reaction L-cysteinyl-[prolipoprotein] + a 1,2-diacyl-sn-glycero-3-phospho-(1'-sn-glycerol) = an S-1,2-diacyl-sn-glyceryl-L-cysteinyl-[prolipoprotein] + sn-glycerol 1-phosphate + H(+). Its pathway is protein modification; lipoprotein biosynthesis (diacylglyceryl transfer). Functionally, catalyzes the transfer of the diacylglyceryl group from phosphatidylglycerol to the sulfhydryl group of the N-terminal cysteine of a prolipoprotein, the first step in the formation of mature lipoproteins. In Treponema pallidum (strain Nichols), this protein is Phosphatidylglycerol--prolipoprotein diacylglyceryl transferase.